Consider the following 478-residue polypeptide: Vitronectin (478 aa).

Residues 1-19 (MAPLRPFFILALVAWVSLA) form the signal peptide. One can recognise an SMB domain in the interval 20–63 (DQESCKGRCTQGFMASKKCQCDELCTYYQSCCADYMEQCKPQVT). 7 disulfides stabilise this stretch: Cys24–Cys28, Cys24–Cys40, Cys28–Cys58, Cys38–Cys40, Cys38–Cys51, Cys44–Cys50, and Cys51–Cys58. Residues 64-66 (RGD) carry the Cell attachment site motif. Position 69 is a phosphothreonine (Thr69). Sulfotyrosine occurs at positions 75, 78, and 80. A disordered region spans residues 82 to 153 (EEPKNNTNTG…QGTPEFPEEE (72 aa)). Asn86 is a glycosylation site (N-linked (GlcNAc...) asparagine). Over residues 86 to 99 (NNTNTGVQPENTSP) the composition is skewed to polar residues. A compositionally biased stretch (basic and acidic residues) spans 131–141 (EQQEEILRPDT). Hemopexin repeat units follow at residues 157 to 201 (GKPF…VWGI), 202 to 249 (EGPI…FSGI), and 250 to 304 (PDNV…FEHF). 2 N-linked (GlcNAc...) asparagine glycosylation sites follow: Asn168 and Asn241. Tyr278 and Tyr281 each carry sulfotyrosine. A disulfide bond links Cys292 and Cys431. Phosphoserine is present on residues Ser311 and Ser362. A disordered region spans residues 359-395 (LSHSAQAKKQKSKRRSRKRYRSRRGRGHRRSQSSNSR). Residues 364 to 389 (QAKKQKSKRRSRKRYRSRRGRGHRRS) show a composition bias toward basic residues. The tract at residues 366–399 (KKQKSKRRSRKRYRSRRGRGHRRSQSSNSRRSSR) is heparin-binding. At Ser398 the chain carries Phosphoserine; by PKA. Tyr416, Tyr419, and Tyr421 each carry sulfotyrosine. The Hemopexin 4 repeat unit spans residues 420–473 (DYDMDWLVPATCEPIQSVYFFSGDKYYRVNLRTRRVDSVNPPYPRSIAQYWLGC).

In terms of assembly, interacts with SERPINE1/PAI1, insulin and C1QBP. In terms of processing, sulfated on tyrosine residues. Post-translationally, N- and O-glycosylated. It has been suggested that the active SMB domain may be permitted considerable disulfide bond heterogeneity or variability, thus two alternate disulfide patterns based on 3D structures are described with 1 disulfide bond conserved in both. As to expression, plasma.

It localises to the secreted. The protein localises to the extracellular space. In terms of biological role, vitronectin is a cell adhesion and spreading factor found in serum and tissues. Vitronectin interact with glycosaminoglycans and proteoglycans. Is recognized by certain members of the integrin family and serves as a cell-to-substrate adhesion molecule. Inhibitor of the membrane-damaging effect of the terminal cytolytic complement pathway. The protein is Vitronectin (Vtn) of Mus musculus (Mouse).